The sequence spans 469 residues: Putative dipeptidase SE_1424 (469 aa).

His-84 contacts Zn(2+). Asp-86 is an active-site residue. Asp-115 lines the Zn(2+) pocket. Catalysis depends on Glu-149, which acts as the Proton acceptor. Positions 150, 173, and 440 each coordinate Zn(2+).

Belongs to the peptidase M20A family. The cofactor is Zn(2+).

This chain is Putative dipeptidase SE_1424, found in Staphylococcus epidermidis (strain ATCC 12228 / FDA PCI 1200).